The following is a 312-amino-acid chain: Acetyl-coenzyme A carboxylase carboxyl transferase subunit alpha (312 aa).

The CoA carboxyltransferase C-terminal domain maps to 36–286 (RLEKEVKSIY…KEYFLDALRT (251 aa)).

Belongs to the AccA family. Acetyl-CoA carboxylase is a heterohexamer composed of biotin carboxyl carrier protein (AccB), biotin carboxylase (AccC) and two subunits each of ACCase subunit alpha (AccA) and ACCase subunit beta (AccD).

It localises to the cytoplasm. The enzyme catalyses N(6)-carboxybiotinyl-L-lysyl-[protein] + acetyl-CoA = N(6)-biotinyl-L-lysyl-[protein] + malonyl-CoA. Its pathway is lipid metabolism; malonyl-CoA biosynthesis; malonyl-CoA from acetyl-CoA: step 1/1. Functionally, component of the acetyl coenzyme A carboxylase (ACC) complex. First, biotin carboxylase catalyzes the carboxylation of biotin on its carrier protein (BCCP) and then the CO(2) group is transferred by the carboxyltransferase to acetyl-CoA to form malonyl-CoA. This is Acetyl-coenzyme A carboxylase carboxyl transferase subunit alpha from Helicobacter pylori (strain P12).